The sequence spans 279 residues: Shikimate dehydrogenase (NADP(+)) (279 aa).

Shikimate-binding positions include 18 to 20 (SRS) and T64. The active-site Proton acceptor is the K68. E80 is an NADP(+) binding site. Residues N89 and D104 each contribute to the shikimate site. NADP(+)-binding positions include 129 to 133 (GAGGA), 153 to 158 (NRTVSR), and I218. Residue Y220 coordinates shikimate. G241 provides a ligand contact to NADP(+).

This sequence belongs to the shikimate dehydrogenase family. Homodimer.

The enzyme catalyses shikimate + NADP(+) = 3-dehydroshikimate + NADPH + H(+). It functions in the pathway metabolic intermediate biosynthesis; chorismate biosynthesis; chorismate from D-erythrose 4-phosphate and phosphoenolpyruvate: step 4/7. Its function is as follows. Involved in the biosynthesis of the chorismate, which leads to the biosynthesis of aromatic amino acids. Catalyzes the reversible NADPH linked reduction of 3-dehydroshikimate (DHSA) to yield shikimate (SA). This chain is Shikimate dehydrogenase (NADP(+)), found in Chelativorans sp. (strain BNC1).